Reading from the N-terminus, the 141-residue chain is Large ribosomal subunit protein uL11 (141 aa).

It belongs to the universal ribosomal protein uL11 family. Part of the ribosomal stalk of the 50S ribosomal subunit. Interacts with L10 and the large rRNA to form the base of the stalk. L10 forms an elongated spine to which L12 dimers bind in a sequential fashion forming a multimeric L10(L12)X complex. In terms of processing, one or more lysine residues are methylated.

Forms part of the ribosomal stalk which helps the ribosome interact with GTP-bound translation factors. The polypeptide is Large ribosomal subunit protein uL11 (Synechococcus sp. (strain JA-3-3Ab) (Cyanobacteria bacterium Yellowstone A-Prime)).